Reading from the N-terminus, the 282-residue chain is UPF0759 protein YunF (282 aa).

It belongs to the UPF0759 family.

The sequence is that of UPF0759 protein YunF (yunF) from Bacillus subtilis (strain 168).